The primary structure comprises 414 residues: Esterase FrsA (414 aa).

Belongs to the FrsA family.

It catalyses the reaction a carboxylic ester + H2O = an alcohol + a carboxylate + H(+). Its function is as follows. Catalyzes the hydrolysis of esters. In Shigella boydii serotype 18 (strain CDC 3083-94 / BS512), this protein is Esterase FrsA.